An 800-amino-acid chain; its full sequence is MVPLCLLLYLATLVFPPVYSAHLLSPEPTDWVSSEVEVFLEDYVAGVGDTVVLSCTPQDFLLPIVWQKDGDAVSSSNRTRVGQKALRIINVSYEDSGVYSCRHAHKSMLLSNYTVKVIDSLSSGDDEDYDEDEDEAGNGNAEAPYWTRSDRMEKKLLAVPAANTVKFRCPAAGNPTPSIHWLKNGKEFKGEQRMGGIKLRHQQWSLVMESAVPSDRGNYTCVVQNKYGSIKHTYQLDVLERSPHRPILQAGLPANQTVVVGSDVEFHCKVYSDAQPHIQWLKHIEVNGSQYGPNGAPYVNVLKTAGINTTDKELEILYLTNVSFEDAGQYTCLAGNSIGYNHHSAWLTVLPAVEMEREDDYADILIYVTSCVLFILTMVIIILCRMWINTQKTLPAPPVQKLSKFPLKRQVSLESNSSMNSNTPLVRIARLSSSDGPMLPNVSELELPSDPKWEFTRTKLTLGKPLGEGCFGQVVMAEAIGIDKEKPNKPLTVAVKMLKDDGTDKDLSDLVSEMEMMKMIGKHKNIINLLGACTQDGPLYVLVEYASKGNLREYLRARRPPGMDYSFDTCKIPNETLTFKDLVSCAYQVARGMEYLASKKCIHRDPAARNVLVTEDNVMKIADFGLARDVHNIDYYKKTTNGRLPVKWMAPEALFDRVYTHQSDVWSYGVLLWEIFTLGGSPYPGIPVEELFKLLKEGHRMDKPANCTHELYMIMRECWHAVPSQRPTFRQLVEDHDRVLSMTSTDEYLDLSVPFEQYSPTCPDSNSTCSSGDDSVFAHDPLPEEPCLPKHHHSNGVIRT.

Positions 1–20 are cleaved as a signal peptide; it reads MVPLCLLLYLATLVFPPVYS. The Ig-like C2-type 1 domain maps to 21-122; sequence AHLLSPEPTD…YTVKVIDSLS (102 aa). Topologically, residues 21–363 are extracellular; the sequence is AHLLSPEPTD…EMEREDDYAD (343 aa). Cysteines 55 and 101 form a disulfide. Asparagine 77, asparagine 90, and asparagine 112 each carry an N-linked (GlcNAc...) asparagine glycan. Positions 124–136 are enriched in acidic residues; the sequence is GDDEDYDEDEDEA. The interval 124-143 is disordered; the sequence is GDDEDYDEDEDEAGNGNAEA. 2 Ig-like C2-type domains span residues 144–237 and 246–348; these read PYWT…YQLD and PILQ…AWLT. A disulfide bridge connects residues cysteine 169 and cysteine 221. Asparagine 218, asparagine 255, asparagine 287, asparagine 308, and asparagine 321 each carry an N-linked (GlcNAc...) asparagine glycan. Cysteine 268 and cysteine 332 are joined by a disulfide. The helical transmembrane segment at 364 to 384 threads the bilayer; the sequence is ILIYVTSCVLFILTMVIIILC. The Cytoplasmic portion of the chain corresponds to 385-800; sequence RMWINTQKTL…HHHSNGVIRT (416 aa). In terms of domain architecture, Protein kinase spans 460–739; sequence LTLGKPLGEG…RQLVEDHDRV (280 aa). Residues 466–474 and lysine 496 contribute to the ATP site; that span reads LGEGCFGQV. The Proton acceptor role is filled by aspartate 605. Phosphotyrosine; by autocatalysis is present on residues tyrosine 635, tyrosine 636, tyrosine 712, and tyrosine 748. Polar residues predominate over residues 764–773; that stretch reads DSNSTCSSGD. A disordered region spans residues 764–800; the sequence is DSNSTCSSGDDSVFAHDPLPEEPCLPKHHHSNGVIRT.

It belongs to the protein kinase superfamily. Tyr protein kinase family. Fibroblast growth factor receptor subfamily. As to quaternary structure, monomer. Homodimer after ligand binding. Autophosphorylated. Binding of FGF family members together with heparan sulfate proteoglycan or heparin promotes receptor dimerization and autophosphorylation on tyrosine residues. Autophosphorylation occurs in trans between the two FGFR molecules present in the dimer.

Its subcellular location is the cell membrane. The enzyme catalyses L-tyrosyl-[protein] + ATP = O-phospho-L-tyrosyl-[protein] + ADP + H(+). Its activity is regulated as follows. Present in an inactive conformation in the absence of bound ligand. Ligand binding leads to dimerization and activation by autophosphorylation on tyrosine residues. Functionally, tyrosine-protein kinase that acts as a cell-surface receptor for fibroblast growth factors and plays an essential role in the regulation of cell proliferation, differentiation and apoptosis. Plays an essential role in the regulation of chondrocyte differentiation, proliferation and apoptosis, and is required for normal skeleton development. Regulates both osteogenesis and postnatal bone mineralization by osteoblasts. Promotes apoptosis in chondrocytes, but can also promote cancer cell proliferation. Phosphorylates PLCG1, CBL and FRS2. Ligand binding leads to the activation of several signaling cascades. Activation of PLCG1 leads to the production of the cellular signaling molecules diacylglycerol and inositol 1,4,5-trisphosphate. Phosphorylation of FRS2 triggers recruitment of GRB2, GAB1, PIK3R1 and SOS1, and mediates activation of RAS, MAPK1/ERK2, MAPK3/ERK1 and the MAP kinase signaling pathway, as well as of the AKT1 signaling pathway. The sequence is that of Fibroblast growth factor receptor 3 (fgfr3) from Danio rerio (Zebrafish).